A 639-amino-acid chain; its full sequence is 1-deoxy-D-xylulose-5-phosphate synthase 1 (639 aa).

Residues His79 and 120-122 (AHS) contribute to the thiamine diphosphate site. Asp155 lines the Mg(2+) pocket. Residues 156–157 (GA), Asn184, Tyr293, and Glu373 each bind thiamine diphosphate. Residue Asn184 participates in Mg(2+) binding.

The protein belongs to the transketolase family. DXPS subfamily. In terms of assembly, homodimer. The cofactor is Mg(2+). Requires thiamine diphosphate as cofactor.

The catalysed reaction is D-glyceraldehyde 3-phosphate + pyruvate + H(+) = 1-deoxy-D-xylulose 5-phosphate + CO2. It participates in metabolic intermediate biosynthesis; 1-deoxy-D-xylulose 5-phosphate biosynthesis; 1-deoxy-D-xylulose 5-phosphate from D-glyceraldehyde 3-phosphate and pyruvate: step 1/1. In terms of biological role, catalyzes the acyloin condensation reaction between C atoms 2 and 3 of pyruvate and glyceraldehyde 3-phosphate to yield 1-deoxy-D-xylulose-5-phosphate (DXP). The polypeptide is 1-deoxy-D-xylulose-5-phosphate synthase 1 (Jannaschia sp. (strain CCS1)).